Consider the following 418-residue polypeptide: Sonic hedgehog protein (418 aa).

A signal peptide spans 1–23 (MRLLTRVLLVSLLTLSLVVSGLA). The N-palmitoyl cysteine moiety is linked to residue cysteine 24. The Cardin-Weintraub motif lies at 32–38 (RRRHPKK). 7 residues coordinate Ca(2+): glutamate 89, glutamate 90, aspartate 95, threonine 125, glutamate 126, aspartate 129, and aspartate 131. Zn(2+)-binding residues include histidine 140, aspartate 147, and histidine 182. A lipid anchor (Cholesterol glycine ester) is attached at glycine 197.

The protein belongs to the hedgehog family. As to quaternary structure, interacts with HHATL/GUP1 which negatively regulates HHAT-mediated palmitoylation of the SHH N-terminus. Interacts with BOC and CDON. Interacts with HHIP. Interacts with DISP1 via its cholesterol anchor. Interacts with SCUBE2. In terms of assembly, multimer. The C-terminal domain displays an autoproteolysis activity and a cholesterol transferase activity. Both activities result in the cleavage of the full-length protein and covalent attachment of a cholesterol moiety to the C-terminal of the newly generated N-terminal fragment (ShhN). Cholesterylation is required for the sonic hedgehog protein N-product targeting to lipid rafts and multimerization. ShhN is the active species in both local and long-range signaling, whereas the C-product (ShhC) is degraded in the reticulum endoplasmic. Post-translationally, N-palmitoylation by HHAT of ShhN is required for sonic hedgehog protein N-product multimerization and full activity. It is a prerequisite for the membrane-proximal positioning and the subsequent shedding of this N-terminal peptide. In terms of processing, the lipidated N- and C-terminal peptides of ShhNp can be cleaved (shedding). The N-terminal palmitoylated peptide is cleaved at the Cardin-Weintraub (CW) motif site. The cleavage reduced the interactions with heparan sulfate. The cleavage is enhanced by SCUBE2. In terms of tissue distribution, expressed in the ventral midline of the neural tube and brain. Also found in the notochord and in developing fin bud. In the developing brain, expression occurs in domains that include a discrete region in the floor of the diencephalon.

It is found in the endoplasmic reticulum membrane. It localises to the golgi apparatus membrane. The protein localises to the cell membrane. The enzyme catalyses glycyl-L-cysteinyl-[protein] + cholesterol + H(+) = [protein]-C-terminal glycyl cholesterol ester + N-terminal L-cysteinyl-[protein]. Functionally, the C-terminal part of the sonic hedgehog protein precursor displays an autoproteolysis and a cholesterol transferase activity. Both activities result in the cleavage of the full-length protein into two parts (ShhN and ShhC) followed by the covalent attachment of a cholesterol moiety to the C-terminal of the newly generated ShhN. Both activities occur in the endoplasmic reticulum. Once cleaved, ShhC is degraded in the endoplasmic reticulum. Its function is as follows. The dually lipidated sonic hedgehog protein N-product (ShhNp) is a morphogen which is essential for a variety of patterning events during development. Involved in dorso-ventral patterning of the brain and in early patterning of the developing eyes. Binds to the patched (PTCH1) receptor, which functions in association with smoothened (SMO), to activate the transcription of target genes. In the absence of SHH, PTCH1 represses the constitutive signaling activity of SMO. The sequence is that of Sonic hedgehog protein (shha) from Danio rerio (Zebrafish).